We begin with the raw amino-acid sequence, 238 residues long: Epoxyqueuosine reductase QueH (238 aa).

4 residues coordinate [4Fe-4S] cluster: Cys-43, Cys-44, Cys-129, and Cys-132. Cys-211 and Cys-213 are oxidised to a cystine.

Belongs to the QueH family.

The catalysed reaction is epoxyqueuosine(34) in tRNA + AH2 = queuosine(34) in tRNA + A + H2O. It functions in the pathway tRNA modification; tRNA-queuosine biosynthesis. Functionally, catalyzes the conversion of epoxyqueuosine (oQ) to queuosine (Q), which is a hypermodified base found in the wobble positions of tRNA(Asp), tRNA(Asn), tRNA(His) and tRNA(Tyr). The sequence is that of Epoxyqueuosine reductase QueH from Staphylococcus epidermidis (strain ATCC 12228 / FDA PCI 1200).